Consider the following 154-residue polypeptide: Myoglobin (154 aa).

Residues 2–148 (GLSDGEWELV…FRNDIAAKYK (147 aa)) form the Globin domain. Residue Ser4 is modified to Phosphoserine. Thr68 is modified (phosphothreonine). His94 serves as a coordination point for heme b.

Belongs to the globin family. Monomeric.

It localises to the cytoplasm. The protein localises to the sarcoplasm. The catalysed reaction is Fe(III)-heme b-[protein] + nitric oxide + H2O = Fe(II)-heme b-[protein] + nitrite + 2 H(+). The enzyme catalyses H2O2 + AH2 = A + 2 H2O. In terms of biological role, monomeric heme protein which primary function is to store oxygen and facilitate its diffusion within muscle tissues. Reversibly binds oxygen through a pentacoordinated heme iron and enables its timely and efficient release as needed during periods of heightened demand. Depending on the oxidative conditions of tissues and cells, and in addition to its ability to bind oxygen, it also has a nitrite reductase activity whereby it regulates the production of bioactive nitric oxide. Under stress conditions, like hypoxia and anoxia, it also protects cells against reactive oxygen species thanks to its pseudoperoxidase activity. The chain is Myoglobin (MB) from Loxodonta africana (African elephant).